The sequence spans 548 residues: NAD(P)H-quinone oxidoreductase chain 4 (548 aa).

The next 14 helical transmembrane spans lie at 17–37 (VPWL…IPFI), 48–68 (WYAL…YLTG), 103–123 (LILL…PVTF), 127–147 (LFFF…AVQD), 149–169 (LLFF…LAIW), 181–201 (FILY…AMGF), 222–242 (GFQL…LPIV), 256–276 (TAPV…YALL), 290–310 (FAPL…LTSF), 327–347 (MGFV…GAML), 348–368 (QMIS…ATYD), 389–409 (FALW…SGFV), 430–450 (VVIC…LLSM), and 477–497 (VYII…PRLM).

It belongs to the complex I subunit 4 family.

The protein localises to the cellular thylakoid membrane. The catalysed reaction is a plastoquinone + NADH + (n+1) H(+)(in) = a plastoquinol + NAD(+) + n H(+)(out). It catalyses the reaction a plastoquinone + NADPH + (n+1) H(+)(in) = a plastoquinol + NADP(+) + n H(+)(out). In terms of biological role, NDH-1 shuttles electrons from NAD(P)H, via FMN and iron-sulfur (Fe-S) centers, to quinones in the respiratory chain. The immediate electron acceptor for the enzyme in this species is believed to be plastoquinone. Couples the redox reaction to proton translocation (for every two electrons transferred, four hydrogen ions are translocated across the cytoplasmic membrane), and thus conserves the redox energy in a proton gradient. In Synechococcus sp. (strain CC9902), this protein is NAD(P)H-quinone oxidoreductase chain 4.